The primary structure comprises 139 residues: Large ribosomal subunit protein uL13 (139 aa).

The protein belongs to the universal ribosomal protein uL13 family. As to quaternary structure, part of the 50S ribosomal subunit.

In terms of biological role, this protein is one of the early assembly proteins of the 50S ribosomal subunit, although it is not seen to bind rRNA by itself. It is important during the early stages of 50S assembly. In Nitratiruptor sp. (strain SB155-2), this protein is Large ribosomal subunit protein uL13.